The following is a 120-amino-acid chain: MGKRTPRELRLRRHNRIRKRVFGTPERPRLNVFRSHVHIYAQVIDDTVGHTLVAASTNEKGWSGSPELTKTQEAALVGKLIAERALQAGITKVVFDRGGYKYHGRVKALAEAAREAGLNF.

The protein belongs to the universal ribosomal protein uL18 family. In terms of assembly, part of the 50S ribosomal subunit; part of the 5S rRNA/L5/L18/L25 subcomplex. Contacts the 5S and 23S rRNAs.

Its function is as follows. This is one of the proteins that bind and probably mediate the attachment of the 5S RNA into the large ribosomal subunit, where it forms part of the central protuberance. This Chloroflexus aurantiacus (strain ATCC 29364 / DSM 637 / Y-400-fl) protein is Large ribosomal subunit protein uL18.